The primary structure comprises 517 residues: Glutamyl-tRNA(Gln) amidotransferase subunit A, mitochondrial (517 aa).

Catalysis depends on charge relay system residues K58 and S131. Residues 106–132 (FGMGTHSTHSAHGPVASPAGRSAGGSS) form a disordered region. Catalysis depends on S155, which acts as the Acyl-ester intermediate.

Belongs to the amidase family. GatA subfamily. Subunit of the heterotrimeric GatCAB amidotransferase (AdT) complex, composed of A, B and C subunits.

It localises to the mitochondrion. It carries out the reaction L-glutamyl-tRNA(Gln) + L-glutamine + ATP + H2O = L-glutaminyl-tRNA(Gln) + L-glutamate + ADP + phosphate + H(+). In terms of biological role, allows the formation of correctly charged Gln-tRNA(Gln) through the transamidation of misacylated Glu-tRNA(Gln) in the mitochondria. The reaction takes place in the presence of glutamine and ATP through an activated gamma-phospho-Glu-tRNA(Gln). The polypeptide is Glutamyl-tRNA(Gln) amidotransferase subunit A, mitochondrial (Pyricularia oryzae (strain 70-15 / ATCC MYA-4617 / FGSC 8958) (Rice blast fungus)).